Consider the following 40-residue polypeptide: Esterase-4 (40 aa).

Belongs to the type-B carboxylesterase/lipase family.

It catalyses the reaction a carboxylic ester + H2O = an alcohol + a carboxylate + H(+). This Drosophila mojavensis (Fruit fly) protein is Esterase-4 (Est-4).